We begin with the raw amino-acid sequence, 377 residues long: Ejaculatory bulb-specific protein 1 (377 aa).

The N-terminal stretch at 1–20 (MVRQLILVLSLILFCGSSHA) is a signal peptide. Residues 155-253 (PIRPGGLFPG…NRPGRPFPGG (99 aa)) are disordered. Residues 165 to 228 (GPSPGGPSPG…GGSPPSPGGP (64 aa)) are compositionally biased toward pro residues.

As to expression, specifically expressed in the ejaculatory bulb and seminal fluid. Detected in mated females 3 minutes after the start of mating, and for at least 3 hours after the start of mating.

The protein resides in the secreted. In terms of biological role, major protein component of the posterior mating plug. Accessory gland proteins constitute, or are required for formation of the anterior mating plug. Posterior mating plug forms before sperm transfer and the anterior mating plug is formed after the start of mating. In Drosophila melanogaster (Fruit fly), this protein is Ejaculatory bulb-specific protein 1.